The following is a 398-amino-acid chain: MTEQKGRYLFTSESVTEGHPDKMADQISDAVLDAILALDPRARVACETLLTTGLVVVTGEITTHAYVDIPNLVRDVVRDIGYTRAKYGFDGSTCGVMTAIDPQSPDIAQGVDVAIEVRGEVNEKELEIGAGDQGMMFGFACDETPELMPLPISLAHRLARRLAQVRKNGTLPYLRPDGKTQVTIEYEDGRPKRIDTIVISAQHDPDTTQEQIRKDVIDYVILDVVDRNLIDDRTRYFINPTGRFVVGGPQGDTGLTGRKIIVDTYGGYARHGGGAFSGKDPTKVDRSGAYAARWVAKNIVAAGLARKCEVQVAYAIGVAHPVSILVTTFGTGKLPDERLAQLVRETFDLRPGAIIRDLDLRRPIYRQVAAYGHFGRPDLDLPWERTDKVDLLREKAGI.

His-19 lines the ATP pocket. A Mg(2+)-binding site is contributed by Asp-21. Glu-47 serves as a coordination point for K(+). Residues Glu-60 and Gln-103 each contribute to the L-methionine site. A flexible loop region spans residues 103–113 (QSPDIAQGVDV). ATP contacts are provided by residues 177–179 (DGK), 243–244 (RF), Asp-252, 258–259 (RK), Ala-275, and Lys-279. Asp-252 lines the L-methionine pocket. Lys-283 is an L-methionine binding site.

It belongs to the AdoMet synthase family. Homotetramer; dimer of dimers. It depends on Mg(2+) as a cofactor. K(+) is required as a cofactor.

The protein localises to the cytoplasm. The enzyme catalyses L-methionine + ATP + H2O = S-adenosyl-L-methionine + phosphate + diphosphate. Its pathway is amino-acid biosynthesis; S-adenosyl-L-methionine biosynthesis; S-adenosyl-L-methionine from L-methionine: step 1/1. Catalyzes the formation of S-adenosylmethionine (AdoMet) from methionine and ATP. The overall synthetic reaction is composed of two sequential steps, AdoMet formation and the subsequent tripolyphosphate hydrolysis which occurs prior to release of AdoMet from the enzyme. The polypeptide is S-adenosylmethionine synthase (Symbiobacterium thermophilum (strain DSM 24528 / JCM 14929 / IAM 14863 / T)).